We begin with the raw amino-acid sequence, 1208 residues long: Putative protease AXL1 (1208 aa).

His-68 contributes to the Zn(2+) binding site. Glu-71 acts as the Proton acceptor in catalysis. Zn(2+)-binding residues include His-72 and Glu-156. Ser-262 is subject to Phosphoserine.

This sequence belongs to the peptidase M16 family. Interacts with BUD5. Zn(2+) serves as cofactor.

Its subcellular location is the bud neck. In terms of biological role, probable protease. Involved in axial budding. The sequence is that of Putative protease AXL1 (AXL1) from Saccharomyces cerevisiae (strain ATCC 204508 / S288c) (Baker's yeast).